The following is a 272-amino-acid chain: Undecaprenyl-diphosphatase (272 aa).

Transmembrane regions (helical) follow at residues Phe22–Gly42, Ala45–Trp65, Ser92–Ile112, Pro118–Leu138, Tyr189–Leu209, Val228–Ile248, and Ile251–Phe271.

It belongs to the UppP family.

The protein resides in the cell inner membrane. The enzyme catalyses di-trans,octa-cis-undecaprenyl diphosphate + H2O = di-trans,octa-cis-undecaprenyl phosphate + phosphate + H(+). Catalyzes the dephosphorylation of undecaprenyl diphosphate (UPP). Confers resistance to bacitracin. The sequence is that of Undecaprenyl-diphosphatase from Photorhabdus laumondii subsp. laumondii (strain DSM 15139 / CIP 105565 / TT01) (Photorhabdus luminescens subsp. laumondii).